The primary structure comprises 684 residues: Glycine--tRNA ligase beta subunit (684 aa).

It belongs to the class-II aminoacyl-tRNA synthetase family. In terms of assembly, tetramer of two alpha and two beta subunits.

The protein localises to the cytoplasm. The catalysed reaction is tRNA(Gly) + glycine + ATP = glycyl-tRNA(Gly) + AMP + diphosphate. In Pseudomonas syringae pv. tomato (strain ATCC BAA-871 / DC3000), this protein is Glycine--tRNA ligase beta subunit.